A 589-amino-acid polypeptide reads, in one-letter code: Kelch-like protein 25 (589 aa).

Residues 46–114 (TDVTLWAGDR…AYSSRIAINE (69 aa)) enclose the BTB domain. One can recognise a BACK domain in the interval 149–250 (CLGMMLLSDA…LPSDCLQEAV (102 aa)). 6 Kelch repeats span residues 296–340 (TLLI…AIGC), 341–388 (KVYV…ELEN), 389–444 (CLYV…SAKL), 446–492 (LFVF…VLGS), 494–538 (IFIM…ASGN), and 539–585 (KLYV…STWK).

Component of the BCR(KLHL25) E3 ubiquitin ligase complex, at least composed of CUL3, KLHL25 and RBX1.

The protein operates within protein modification; protein ubiquitination. Substrate-specific adapter of a BCR (BTB-CUL3-RBX1) E3 ubiquitin ligase complex involved in various processes, such as translation homeostasis and lipid synthesis. The BCR(KLHL25) ubiquitin ligase complex acts by mediating ubiquitination of hypophosphorylated EIF4EBP1 (4E-BP1): ubiquitination and subsequent degradation of hypophosphorylated EIF4EBP1 (4E-BP1) probably serves as a homeostatic mechanism to maintain translation and prevent eIF4E inhibition when eIF4E levels are low. The BCR(KLHL25) complex does not target EIF4EBP1 (4E-BP1) when it is hyperphosphorylated or associated with eIF4E. The BCR(KLHL25) complex also acts as a regulator of lipid synthesis by mediating ubiquitination and degradation of ACLY, thereby inhibiting lipid synthesis. BCR(KLHL25)-mediated degradation of ACLY promotes fatty acid oxidation and is required for differentiation of inducible regulatory T (iTreg) cells. This chain is Kelch-like protein 25, found in Homo sapiens (Human).